A 274-amino-acid polypeptide reads, in one-letter code: 2-amino-4,5-dihydroxy-6-oxo-7-(phosphonooxy)heptanoate synthase (274 aa).

The protein belongs to the DeoC/FbaB aldolase family. GriI subfamily. In terms of assembly, homodecamer.

The catalysed reaction is 2-amino-4,5-dihydroxy-6-oxo-7-(phosphooxy)heptanoate = L-aspartate 4-semialdehyde + dihydroxyacetone phosphate. Its function is as follows. catalyzes aldol condensation between L-aspartate-4-semialdehyde (ASA) and dihydroxyacetone phosphate (DHAP), to form 2-amino-4,5-dihydroxy-6-oxo-7-(phosphonooxy)heptanoate. The polypeptide is 2-amino-4,5-dihydroxy-6-oxo-7-(phosphonooxy)heptanoate synthase (griI) (Streptomyces griseus subsp. griseus (strain JCM 4626 / CBS 651.72 / NBRC 13350 / KCC S-0626 / ISP 5235)).